The sequence spans 247 residues: MLLLLPILNLSLQLHPVAALFTVTAPKEVYTVDVGSSVSLECDFDRRECTELEGIRASLQKVENDTSLQSERATLLEEQLPLGKALFHIPSVQVRDSGQYRCLVICGAAWDYKYLTVKVKASYMRIDTRILEVPGTGEVQLTCQARGYPLAEVSWQNVSVPANTSHIRTPEGLYQVTSVLRLKPQPSRNFSCMFWNAHMKELTSAIIDPLSRMEPKVPRTWPLHVFIPACTIALIFLAIVIIQRKRI.

Residues 1 to 19 (MLLLLPILNLSLQLHPVAA) form the signal peptide. The Extracellular portion of the chain corresponds to 20–221 (LFTVTAPKEV…RMEPKVPRTW (202 aa)). In terms of domain architecture, Ig-like V-type spans 21-118 (FTVTAPKEVY…AWDYKYLTVK (98 aa)). Cystine bridges form between Cys-42–Cys-102 and Cys-143–Cys-192. 4 N-linked (GlcNAc...) asparagine glycosylation sites follow: Asn-64, Asn-157, Asn-163, and Asn-189. The region spanning 122 to 203 (SYMRIDTRIL…FWNAHMKELT (82 aa)) is the Ig-like C2-type domain. Residues 222 to 242 (PLHVFIPACTIALIFLAIVII) form a helical membrane-spanning segment. Over 243–247 (QRKRI) the chain is Cytoplasmic.

It belongs to the immunoglobulin superfamily. BTN/MOG family. As to quaternary structure, interacts with PDCD1. Expressed in immature and mature bone marrow-derived dendritic cells and splenic dendritic cells. Highly expressed in placenta, liver and weakly expressed in heart, spleen, lymph nodes and thymus. Also expressed in some tumor cell lines of lymphoid origin.

It localises to the cell membrane. In terms of biological role, involved in the costimulatory signal essential for T-cell proliferation and IFNG production in a PDCD1-independent manner. Interaction with PDCD1 inhibits T-cell proliferation by blocking cell cycle progression and cytokine production. This is Programmed cell death 1 ligand 2 (Pdcd1lg2) from Mus musculus (Mouse).